The primary structure comprises 451 residues: Tubulin gamma-2 chain (451 aa).

Ser-131 carries the post-translational modification Phosphoserine; by BRSK1. 142-148 (AGGTGSG) provides a ligand contact to GTP.

The protein belongs to the tubulin family. In terms of assembly, component of the gamma-tubulin ring complex (gTuRC) consisting of TUBGCP2, TUBGCP3, TUBGCP4, TUBGCP5 and TUBGCP6 and gamma-tubulin TUBG1 or TUBG2. TUBGCP2, TUBGCP3, TUBGCP4, TUBGCP5 and TUBGCP6 assemble in a 5:5:2:1:1 stoichiometry; each is associated with a gamma-tubulin, thereby arranging 14 gamma-tubulins in a helical manner. Gamma-tubulin at the first position is blocked by TUBGCP3 at the last position, allowing 13 protafilaments to grow into a microtubule. Interacts with alpha-beta tubulin heterodimers; the interaction allows microtubules to nucleate from the gTuRC. Post-translationally, phosphorylation at Ser-131 by BRSK1 regulates centrosome duplication, possibly by mediating relocation of gamma-tubulin and its associated proteins from the cytoplasm to the centrosome.

Its subcellular location is the cytoplasm. The protein resides in the cytoskeleton. It is found in the microtubule organizing center. The protein localises to the centrosome. Tubulin is the major constituent of microtubules, protein filaments consisting of alpha- and beta-tubulin heterodimers. Gamma-tubulin is a key component of the gamma-tubulin ring complex (gTuRC) which mediates microtubule nucleation. The gTuRC regulates the minus-end nucleation of alpha-beta tubulin heterodimers that grow into microtubule protafilaments, a critical step in centrosome duplication and spindle formation. The chain is Tubulin gamma-2 chain (TUBG2) from Bos taurus (Bovine).